Here is a 132-residue protein sequence, read N- to C-terminus: Small ribosomal subunit protein uS11 (132 aa).

It belongs to the universal ribosomal protein uS11 family. In terms of assembly, part of the 30S ribosomal subunit. Interacts with proteins S7 and S18. Binds to IF-3.

Its function is as follows. Located on the platform of the 30S subunit, it bridges several disparate RNA helices of the 16S rRNA. Forms part of the Shine-Dalgarno cleft in the 70S ribosome. The sequence is that of Small ribosomal subunit protein uS11 from Oenococcus oeni (strain ATCC BAA-331 / PSU-1).